Here is a 154-residue protein sequence, read N- to C-terminus: Transcriptional repressor NrdR (154 aa).

A zinc finger lies at 3-34 (CPFCRHPDSRVVDSREADEGQAIRRRRSCPEC). Residues 46–136 (LAVVKRSGVT…VYRGFSSAED (91 aa)) form the ATP-cone domain.

This sequence belongs to the NrdR family. Zn(2+) serves as cofactor.

In terms of biological role, negatively regulates transcription of bacterial ribonucleotide reductase nrd genes and operons by binding to NrdR-boxes. The polypeptide is Transcriptional repressor NrdR (Mycobacteroides abscessus (strain ATCC 19977 / DSM 44196 / CCUG 20993 / CIP 104536 / JCM 13569 / NCTC 13031 / TMC 1543 / L948) (Mycobacterium abscessus)).